A 195-amino-acid chain; its full sequence is Imidazoleglycerol-phosphate dehydratase (195 aa).

This sequence belongs to the imidazoleglycerol-phosphate dehydratase family.

The protein resides in the cytoplasm. The catalysed reaction is D-erythro-1-(imidazol-4-yl)glycerol 3-phosphate = 3-(imidazol-4-yl)-2-oxopropyl phosphate + H2O. It participates in amino-acid biosynthesis; L-histidine biosynthesis; L-histidine from 5-phospho-alpha-D-ribose 1-diphosphate: step 6/9. This Burkholderia pseudomallei (strain 1710b) protein is Imidazoleglycerol-phosphate dehydratase.